The sequence spans 493 residues: 3-octaprenyl-4-hydroxybenzoate carboxy-lyase (493 aa).

Position 172 (Asn172) interacts with Mn(2+). Residues 175 to 177, 189 to 191, and 194 to 195 contribute to the prenylated FMN site; these read IYR, RWL, and RG. Glu238 serves as a coordination point for Mn(2+). Asp287 functions as the Proton donor in the catalytic mechanism.

It belongs to the UbiD family. As to quaternary structure, homohexamer. The cofactor is prenylated FMN. Mn(2+) is required as a cofactor.

The protein resides in the cell membrane. It carries out the reaction a 4-hydroxy-3-(all-trans-polyprenyl)benzoate + H(+) = a 2-(all-trans-polyprenyl)phenol + CO2. The protein operates within cofactor biosynthesis; ubiquinone biosynthesis. Functionally, catalyzes the decarboxylation of 3-octaprenyl-4-hydroxy benzoate to 2-octaprenylphenol, an intermediate step in ubiquinone biosynthesis. This is 3-octaprenyl-4-hydroxybenzoate carboxy-lyase from Shewanella baltica (strain OS155 / ATCC BAA-1091).